The chain runs to 148 residues: Large-conductance mechanosensitive channel (148 aa).

Helical transmembrane passes span 12-32 (AFAM…GGAF) and 85-105 (GQFL…FLFI).

This sequence belongs to the MscL family. Homopentamer.

It is found in the cell inner membrane. In terms of biological role, channel that opens in response to stretch forces in the membrane lipid bilayer. May participate in the regulation of osmotic pressure changes within the cell. The sequence is that of Large-conductance mechanosensitive channel from Bacteroides thetaiotaomicron (strain ATCC 29148 / DSM 2079 / JCM 5827 / CCUG 10774 / NCTC 10582 / VPI-5482 / E50).